The primary structure comprises 336 residues: UbiA prenyltransferase domain-containing protein 1 (336 aa).

The tract at residues 1-22 (MQEMKPAALSGSNGLNGASGSS) is disordered. Residues 7–22 (AALSGSNGLNGASGSS) are compositionally biased toward low complexity. Helical transmembrane passes span 79-99 (LLLLLVCAVAVLLVHGAGNLV), 129-149 (VVMFGAVLYSAGCLCATLLYF), 158-178 (LALIYFGGLSSSFLYTGGIGL), 180-200 (YVALGDVVILITFGPLAVMFA), 201-221 (HAVQVGYLSVLPLVYAVPLAL), 254-274 (LSYVIYNLLLFVPYLLFCILA), and 315-335 (LLMGLFYVFGIILAPQGSLPL).

It belongs to the UbiA prenyltransferase family.

Its subcellular location is the endoplasmic reticulum membrane. The protein resides in the golgi apparatus membrane. The protein localises to the mitochondrion membrane. The enzyme catalyses menadiol + (2E,6E,10E)-geranylgeranyl diphosphate = menaquinol-4 + diphosphate. The catalysed reaction is all-trans-decaprenyl diphosphate + 4-hydroxybenzoate = 4-hydroxy-3-(all-trans-decaprenyl)benzoate + diphosphate. The protein operates within quinol/quinone metabolism; menaquinone biosynthesis. It functions in the pathway cofactor biosynthesis; ubiquinone biosynthesis. Prenyltransferase that mediates the formation of menaquinone-4 (MK-4) and coenzyme Q10. MK-4 is a vitamin K2 isoform required for endothelial cell development. Mediates the conversion of phylloquinone (PK) into MK-4, probably by cleaving the side chain of phylloquinone (PK) to release 2-methyl-1,4-naphthoquinone (menadione; K3) and then prenylating it with geranylgeranyl pyrophosphate (GGPP) to form MK-4. Also plays a role in cardiovascular development independently of MK-4 biosynthesis, by acting as a coenzyme Q10 biosynthetic enzyme: coenzyme Q10, also named ubiquinone, plays an important antioxidant role in the cardiovascular system. Mediates biosynthesis of coenzyme Q10 in the Golgi membrane, leading to protect cardiovascular tissues from nos3/eNOS-dependent oxidative stress. The sequence is that of UbiA prenyltransferase domain-containing protein 1 (ubiad1) from Danio rerio (Zebrafish).